The sequence spans 61 residues: UPF0434 protein Avin_14770 (61 aa).

It belongs to the UPF0434 family.

The chain is UPF0434 protein Avin_14770 from Azotobacter vinelandii (strain DJ / ATCC BAA-1303).